The primary structure comprises 123 residues: UPF0212 protein rrnAC0441 (123 aa).

Belongs to the UPF0212 family.

This Haloarcula marismortui (strain ATCC 43049 / DSM 3752 / JCM 8966 / VKM B-1809) (Halobacterium marismortui) protein is UPF0212 protein rrnAC0441.